The sequence spans 1684 residues: Protein Wiz (1684 aa).

Positions 1 to 77 are disordered; sequence MEGLLAGGLA…PGLSEALPRA (77 aa). Over residues 13–24 the composition is skewed to basic and acidic residues; it reads DHPRGPAPREDI. 5 consecutive C2H2-type zinc fingers follow at residues 308–330, 345–367, 454–477, 734–756, and 802–824; these read FPCI…MSQH, LACS…WQLH, NTCV…RLVH, RKCP…VRGH, and MRCD…ARAH. The segment at 854 to 876 is disordered; the sequence is LPPSPLGREPGGPPRSFLTSRRP. The segment at 903–925 adopts a C2H2-type 6 zinc-finger fold; that stretch reads TTCEVCGACFETRKGLSSHARSH. Glycyl lysine isopeptide (Lys-Gly) (interchain with G-Cter in SUMO2) cross-links involve residues K916, K972, K988, K1000, and K1021. The disordered stretch occupies residues 1005-1072; sequence FSAKGLTHPS…PLNLTSGPEP (68 aa). S1029 is modified (phosphoserine). T1031 is subject to Phosphothreonine. Glycyl lysine isopeptide (Lys-Gly) (interchain with G-Cter in SUMO2) cross-links involve residues K1033 and K1038. 2 positions are modified to phosphoserine: S1039 and S1045. Over residues 1040-1057 the composition is skewed to polar residues; it reads PQLSLSPRPTSPKAQWPQ. The residue at position 1049 (T1049) is a Phosphothreonine. Residues S1050 and S1058 each carry the phosphoserine modification. Positions 1063–1067 are interaction with CTBP1 and CTBP2 1; the sequence is PLNLT. A C2H2-type 7 zinc finger spans residues 1076 to 1098; sequence IRCEFCGEFFENRKGLSSHARSH. Residue K1089 forms a Glycyl lysine isopeptide (Lys-Gly) (interchain with G-Cter in SUMO2) linkage. A phosphoserine mark is found at S1112 and S1139. The disordered stretch occupies residues 1127 to 1208; the sequence is SRPGGHLHPP…GLATPSLPKK (82 aa). Glycyl lysine isopeptide (Lys-Gly) (interchain with G-Cter in SUMO2) cross-links involve residues K1141 and K1145. Phosphoserine occurs at positions 1155, 1160, and 1167. Residues K1171 and K1172 each participate in a glycyl lysine isopeptide (Lys-Gly) (interchain with G-Cter in SUMO2) cross-link. Phosphoserine occurs at positions 1179 and 1184. K1195 bears the N6,N6,N6-trimethyllysine; by EHMT2; alternate mark. Residue K1195 is modified to N6,N6-dimethyllysine; by EHMT2; alternate. A Glycyl lysine isopeptide (Lys-Gly) (interchain with G-Cter in SUMO2) cross-link involves residue K1210. An interaction with CTBP1 and CTBP2 2 region spans residues 1247-1251; that stretch reads PLNLS. The segment at 1260-1282 adopts a C2H2-type 8 zinc-finger fold; it reads IRCEFCGEFFENRKGLSSHARSH. Residue K1273 forms a Glycyl lysine isopeptide (Lys-Gly) (interchain with G-Cter in SUMO2) linkage. S1296 bears the Phosphoserine mark. Residue K1315 forms a Glycyl lysine isopeptide (Lys-Gly) (interchain with G-Cter in SUMO2) linkage. The tract at residues 1320 to 1384 is disordered; the sequence is AGDLAPALTE…SKPSAASYLG (65 aa). The span at 1335-1351 shows a compositional bias: low complexity; sequence AAPGALHSPLPLSPLAS. 2 positions are modified to phosphoserine: S1342 and S1347. Residues K1376, K1389, K1403, K1405, and K1415 each participate in a glycyl lysine isopeptide (Lys-Gly) (interchain with G-Cter in SUMO2) cross-link. The C2H2-type 9 zinc-finger motif lies at 1430-1452; the sequence is ACCELCGLYFENRKALASHARAH. Glycyl lysine isopeptide (Lys-Gly) (interchain with G-Cter in SUMO2) cross-links involve residues K1481, K1497, and K1510. Disordered regions lie at residues 1496–1587 and 1592–1611; these read TKKF…GEEV and QKLE…PSLV. S1550 carries the post-translational modification Phosphoserine. K1556 participates in a covalent cross-link: Glycyl lysine isopeptide (Lys-Gly) (interchain with G-Cter in SUMO1); alternate. K1556 is covalently cross-linked (Glycyl lysine isopeptide (Lys-Gly) (interchain with G-Cter in SUMO2); alternate). The span at 1556–1574 shows a compositional bias: basic and acidic residues; the sequence is KSEEHQRQNINKFERRQAR. Residues K1567 and K1593 each participate in a glycyl lysine isopeptide (Lys-Gly) (interchain with G-Cter in SUMO2) cross-link. Pro residues predominate over residues 1599–1611; that stretch reads QPPPRVRPVPSLV. A C2H2-type 10 zinc finger spans residues 1629–1655; the sequence is LKCRFCEVEFQGPLSIQEEWVRHLQRH. The segment at 1662–1684 is disordered; that stretch reads SKADPPPEEPQAPQAQTAAVEAP. A Glycyl lysine isopeptide (Lys-Gly) (interchain with G-Cter in SUMO2) cross-link involves residue K1663. The span at 1672–1684 shows a compositional bias: low complexity; it reads QAPQAQTAAVEAP.

It belongs to the krueppel C2H2-type zinc-finger protein family. As to quaternary structure, part of a complex containing at least CDYL, REST, WIZ, SETB1, EHMT1 and EHMT2. Interacts with EHMT1, EHMT2, CTBP1 and CTBP2. As to expression, according to PubMed:9795207, isoform L and isoform S are brain-specific. According to PubMed:16702210, isoform S is ubiquitously expressed.

Its subcellular location is the nucleus. May link EHMT1 and EHMT2 histone methyltransferases to the CTBP corepressor machinery. May be involved in EHMT1-EHMT2 heterodimer formation and stabilization. The polypeptide is Protein Wiz (Wiz) (Mus musculus (Mouse)).